Reading from the N-terminus, the 142-residue chain is MAAGGSDPRSGDVEEDASQLIFPKEFETAETLLNSEVHMLLEHRKQQNESAEDEQELSEVFMKTLNYTARFSRFKNRETIASVRSLLLQKKLHKFELACLANLCPETAEESKALIPSLEGRFEDEELQQILDDIQTKRSFQY.

This sequence belongs to the eukaryotic RPB4 RNA polymerase subunit family. As to quaternary structure, component of the RNA polymerase II (Pol II) core complex consisting of 12 subunits: a ten-subunit catalytic core composed of POLR2A/RPB1, POLR2B/RPB2, POLR2C/RPB3, POLR2I/RPB9, POLR2J/RPB11, POLR2E/RPABC1, POLR2F/RPABC2, POLR2H/RPABC3, POLR2K/RPABC4 and POLR2L/RPABC5 and a mobile stalk composed of two subunits POLR2D/RPB4 and POLR2G/RPB7, protruding from the core and functioning primarily in transcription initiation. Part of Pol II(G) complex, in which Pol II core associates with an additional subunit POLR2M; unlike conventional Pol II, Pol II(G) functions as a transcriptional repressor. Part of Pol II pre-initiation complex (PIC), in which Pol II core assembles with Mediator, general transcription factors and other specific initiation factors including GTF2E1, GTF2E2, GTF2F1, GTF2F2, TCEA1, ERCC2, ERCC3, GTF2H2, GTF2H3, GTF2H4, GTF2H5, GTF2A1, GTF2A2, GTF2B and TBP; this large multi-subunit PIC complex mediates DNA unwinding and targets Pol II core to the transcription start site where the first phosphodiester bond forms.

Its subcellular location is the nucleus. Functionally, core component of RNA polymerase II (Pol II), a DNA-dependent RNA polymerase which synthesizes mRNA precursors and many functional non-coding RNAs using the four ribonucleoside triphosphates as substrates. Pol II is the central component of the basal RNA polymerase II transcription machinery. It is composed of mobile elements that move relative to each other. POLR2D/RPB4 is part of a subcomplex with POLR2G/RPB7 that binds to a pocket formed by POLR2A/RPB1, POLR2B/RPB2 and POLR2F/RPABC2 at the base of the clamp element. The POLR2D/RPB4-POLR2G/RPB7 subcomplex seems to lock the clamp via POLR2G/RPB7 in the closed conformation thus preventing double-stranded DNA to enter the active site cleft. The POLR2D/RPB4-POLR2G/RPB7 subcomplex binds single-stranded DNA and RNA. The polypeptide is DNA-directed RNA polymerase II subunit RPB4 (POLR2D) (Bos taurus (Bovine)).